Consider the following 110-residue polypeptide: Cytochrome subunit of sulfide dehydrogenase (110 aa).

Residues 1–16 (MLAAAPLLLASGNGFA) form the signal peptide. Residues Cys-41, Cys-44, His-45, and Met-83 each contribute to the heme c site.

As to quaternary structure, dimer of one cytochrome and one flavoprotein. Binds 1 heme c group covalently per subunit.

The protein resides in the periplasm. In terms of biological role, monoheme cytochrome that function as the electron transport subunit of sulfide dehydrogenase. The polypeptide is Cytochrome subunit of sulfide dehydrogenase (fccA) (Chlorobaculum tepidum (strain ATCC 49652 / DSM 12025 / NBRC 103806 / TLS) (Chlorobium tepidum)).